We begin with the raw amino-acid sequence, 132 residues long: Small ribosomal subunit protein uS11 (132 aa).

The protein belongs to the universal ribosomal protein uS11 family. Part of the 30S ribosomal subunit.

Its function is as follows. Located on the platform of the 30S subunit. The chain is Small ribosomal subunit protein uS11 (rps11) from Korarchaeum cryptofilum (strain OPF8).